We begin with the raw amino-acid sequence, 435 residues long: Serine/threonine-protein kinase 40 (435 aa).

Positions 35-332 (FILGPRLGNS…EELDSLSSII (298 aa)) constitute a Protein kinase domain. ATP-binding positions include 41–49 (LGNSPVPSI) and Lys-66. Asp-197 (proton acceptor) is an active-site residue.

This sequence belongs to the protein kinase superfamily. CAMK Ser/Thr protein kinase family.

Its subcellular location is the nucleus. It localises to the cytoplasm. The catalysed reaction is L-seryl-[protein] + ATP = O-phospho-L-seryl-[protein] + ADP + H(+). The enzyme catalyses L-threonyl-[protein] + ATP = O-phospho-L-threonyl-[protein] + ADP + H(+). May be a negative regulator of NF-kappa-B and p53-mediated gene transcription. This chain is Serine/threonine-protein kinase 40 (STK40), found in Gallus gallus (Chicken).